The following is a 345-amino-acid chain: Polyprenyl transferase dpmpC (345 aa).

Helical transmembrane passes span Pro24–Ala44, Gly60–Val80, Val101–Leu121, Leu183–Trp203, Cys220–Tyr240, His261–Leu281, Ser286–Ile306, and Leu319–Leu339.

Belongs to the UbiA prenyltransferase family. It depends on Mg(2+) as a cofactor.

It is found in the membrane. It participates in secondary metabolite biosynthesis; terpenoid biosynthesis. Its function is as follows. Polyprenyl transferase; part of the gene cluster that mediates the biosynthesis of diterpenoid pyrones. The first step of the pathway is the synthesis of the alpha-pyrone moiety by the polyketide synthase dpmpA via condensation of one acetyl-CoA starter unit with 3 malonyl-CoA units and 2 methylations. The alpha-pyrone is then combined with geranylgeranyl pyrophosphate (GGPP) formed by the GGPP synthase dpmpD through the action of the prenyltransferase dpmpC to yield a linear alpha-pyrone diterpenoid. Subsequent steps in the diterpenoid pyrone biosynthetic pathway involve the decalin core formation, which is initiated by the epoxidation of the C10-C11 olefin by the FAD-dependent oxidoreductase dpmpE, and is followed by a cyclization cascade catalyzed by the terpene cyclase dpmpB. The short chain dehydrogenase/reductase dpmpG then oxidizes the 8S hydroxy group to a ketone and the short chain dehydrogenase/reductase dpmpH reduces the ketone to the 8R hydroxy group to yield higginsianin B. Higginsianin B is further methylated by the methyltransferase dpmpI to produce the intermediate named FDDP B. The cytochrome P450 monooxygenase dpmpJ then oxidizes the C-26 methyl to primary alcohol, producing the final diterpenoid pyrone with a C-26 primary alcohol on the gamma-pyrone moiety named FDDP C. The chain is Polyprenyl transferase dpmpC from Macrophomina phaseolina (strain MS6) (Charcoal rot fungus).